Consider the following 275-residue polypeptide: 2,3,4,5-tetrahydropyridine-2,6-dicarboxylate N-succinyltransferase (275 aa).

Positions 104 and 141 each coordinate substrate.

The protein belongs to the transferase hexapeptide repeat family. Homotrimer.

Its subcellular location is the cytoplasm. The enzyme catalyses (S)-2,3,4,5-tetrahydrodipicolinate + succinyl-CoA + H2O = (S)-2-succinylamino-6-oxoheptanedioate + CoA. The protein operates within amino-acid biosynthesis; L-lysine biosynthesis via DAP pathway; LL-2,6-diaminopimelate from (S)-tetrahydrodipicolinate (succinylase route): step 1/3. This is 2,3,4,5-tetrahydropyridine-2,6-dicarboxylate N-succinyltransferase from Actinobacillus succinogenes (strain ATCC 55618 / DSM 22257 / CCUG 43843 / 130Z).